We begin with the raw amino-acid sequence, 464 residues long: Arylsulfatase (464 aa).

The signal sequence occupies residues 1–20 (MNKKAMAAAVSMILAGGAHA). The Ca(2+) site is built by aspartate 34, aspartate 35, and serine 72. Catalysis depends on serine 72, which acts as the Nucleophile. 3-oxoalanine (Ser) is present on serine 72. Residue histidine 134 is part of the active site. The Ca(2+) site is built by aspartate 329 and asparagine 330.

Belongs to the sulfatase family. Ca(2+) is required as a cofactor. In terms of processing, the conversion to 3-oxoalanine (also known as C-formylglycine, FGly), of a serine or cysteine residue in prokaryotes and of a cysteine residue in eukaryotes, is critical for catalytic activity.

Its subcellular location is the periplasm. The catalysed reaction is an aryl sulfate + H2O = a phenol + sulfate + H(+). Plays an important role in the mineralization of sulfates. The polypeptide is Arylsulfatase (atsA) (Klebsiella aerogenes (Enterobacter aerogenes)).